The following is a 451-amino-acid chain: Bifunctional protein GlmU (451 aa).

Residues 1–231 are pyrophosphorylase; it reads MDSPLAIIVL…ADEVAGINSR (231 aa). UDP-N-acetyl-alpha-D-glucosamine contacts are provided by residues 10 to 13, Lys24, Gln74, 79 to 80, 102 to 104, Gly142, Glu156, Asn171, and Asn229; these read LAAG, GT, and YGD. Asp104 serves as a coordination point for Mg(2+). Mg(2+) is bound at residue Asn229. The interval 232–252 is linker; that stretch reads GELAEAEGRWQQRRRAAAMAD. Positions 253-451 are N-acetyltransferase; the sequence is GASLIAPETV…MKKKKAEKKS (199 aa). Residues Arg318 and Lys336 each contribute to the UDP-N-acetyl-alpha-D-glucosamine site. The active-site Proton acceptor is the His348. Tyr351 and Asn362 together coordinate UDP-N-acetyl-alpha-D-glucosamine. Acetyl-CoA is bound by residues Ala365, 371–372, Ser390, Ala408, and Arg425; that span reads NY.

It in the N-terminal section; belongs to the N-acetylglucosamine-1-phosphate uridyltransferase family. In the C-terminal section; belongs to the transferase hexapeptide repeat family. In terms of assembly, homotrimer. Requires Mg(2+) as cofactor.

It localises to the cytoplasm. It carries out the reaction alpha-D-glucosamine 1-phosphate + acetyl-CoA = N-acetyl-alpha-D-glucosamine 1-phosphate + CoA + H(+). The catalysed reaction is N-acetyl-alpha-D-glucosamine 1-phosphate + UTP + H(+) = UDP-N-acetyl-alpha-D-glucosamine + diphosphate. The protein operates within nucleotide-sugar biosynthesis; UDP-N-acetyl-alpha-D-glucosamine biosynthesis; N-acetyl-alpha-D-glucosamine 1-phosphate from alpha-D-glucosamine 6-phosphate (route II): step 2/2. Its pathway is nucleotide-sugar biosynthesis; UDP-N-acetyl-alpha-D-glucosamine biosynthesis; UDP-N-acetyl-alpha-D-glucosamine from N-acetyl-alpha-D-glucosamine 1-phosphate: step 1/1. It participates in bacterial outer membrane biogenesis; LPS lipid A biosynthesis. Catalyzes the last two sequential reactions in the de novo biosynthetic pathway for UDP-N-acetylglucosamine (UDP-GlcNAc). The C-terminal domain catalyzes the transfer of acetyl group from acetyl coenzyme A to glucosamine-1-phosphate (GlcN-1-P) to produce N-acetylglucosamine-1-phosphate (GlcNAc-1-P), which is converted into UDP-GlcNAc by the transfer of uridine 5-monophosphate (from uridine 5-triphosphate), a reaction catalyzed by the N-terminal domain. The chain is Bifunctional protein GlmU from Novosphingobium aromaticivorans (strain ATCC 700278 / DSM 12444 / CCUG 56034 / CIP 105152 / NBRC 16084 / F199).